Reading from the N-terminus, the 189-residue chain is MTEYKLVVVGAGGVGKSALTIQLIQNHFVDEYDPTIEDSYRKQVVIDGETCLLDILDTAGQEEYSAMRDQYMRTGEGFLCVFAINNSKSFADINLYREQIKRVKDSDDVPMVLVGNKCDLPTRTVDTKQAHELAKSYGIPFIETSAKTRQGVEDAFYTLVREIRQYRMKKLNSSDDGTQGCMGLPCVVM.

GTP contacts are provided by residues 10-18 and 29-30; these read GAGGVGKSA and VD. An Effector region motif is present at residues 32 to 40; that stretch reads YDPTIEDSY. Threonine 35 is a glycosylation site ((Microbial infection) O-linked (Glc) threonine; by P.sordellii toxin TcsL). 57-61 contacts GTP; the sequence is DTAGQ. Serine 89 carries the phosphoserine modification. GTP is bound at residue 116-119; it reads NKCD. Residues 166 to 185 are hypervariable region; sequence YRMKKLNSSDDGTQGCMGLP. Lysine 170 is covalently cross-linked (Glycyl lysine isopeptide (Lys-Gly) (interchain with G-Cter in ubiquitin)). Residue cysteine 181 is the site of S-palmitoyl cysteine attachment. A lipid anchor (S-farnesyl cysteine) is attached at cysteine 186. Positions 187–189 are cleaved as a propeptide — removed in mature form; it reads VVM.

Belongs to the small GTPase superfamily. Ras family. As to quaternary structure, interacts (active GTP-bound form preferentially) with RGS14. Interacts (active GTP-bound form) with RASSF7. Interacts (active GTP-bound form) with both SHOC2 and PP1c (all isoforms) to form a tertiary complex; SHOC2 and PP1c preferably bind M-Ras/MRAS, but they also bind K-Ras/KRAS, N-Ras/NRAS and H-Ras/HRAS. Post-translationally, palmitoylated by the ZDHHC9-GOLGA7 complex. Depalmitoylated by ABHD17A, ABHD17B and ABHD17C. A continuous cycle of de- and re-palmitoylation regulates rapid exchange between plasma membrane and Golgi. In terms of processing, acetylation at Lys-104 prevents interaction with guanine nucleotide exchange factors (GEFs). Fatty-acylated at Lys-169 and/or Lys-170. Post-translationally, ubiquitinated by the BCR(LZTR1) E3 ubiquitin ligase complex at Lys-170 in a non-degradative manner, leading to inhibit Ras signaling by decreasing Ras association with membranes. In terms of processing, phosphorylation at Ser-89 enhances NRAS association with its downstream effectors. (Microbial infection) Glucosylated at Thr-35 by P.sordellii toxin TcsL.

The protein resides in the cell membrane. It localises to the golgi apparatus membrane. It catalyses the reaction GTP + H2O = GDP + phosphate + H(+). Alternates between an inactive form bound to GDP and an active form bound to GTP. Activated by a guanine nucleotide-exchange factor (GEF) and inactivated by a GTPase-activating protein (GAP). Functionally, ras proteins bind GDP/GTP and possess intrinsic GTPase activity. This chain is GTPase NRas (NRAS), found in Homo sapiens (Human).